A 538-amino-acid chain; its full sequence is Probable bifunctional tRNA threonylcarbamoyladenosine biosynthesis protein (538 aa).

The segment at 1 to 327 is kae1; that stretch reads MIVLICLGIE…FRTDEVEAPW (327 aa). The Fe cation site is built by H111, H115, and Y132. L-threonylcarbamoyladenylate is bound by residues 132 to 136, D164, G177, E181, and N260; that span reads YVSGG. Position 288 (D288) interacts with Fe cation. Residues 336-538 form the Protein kinase domain; the sequence is KLPDNLIAKG…EIESRGRYTH (203 aa). ATP-binding positions include 342–350 and K363; that span reads IAKGAESDI. D452 serves as the catalytic Proton acceptor; for kinase activity.

It in the N-terminal section; belongs to the KAE1 / TsaD family. This sequence in the C-terminal section; belongs to the protein kinase superfamily. Tyr protein kinase family. BUD32 subfamily. As to quaternary structure, component of the KEOPS complex that consists of Kae1, Bud32, Cgi121 and Pcc1; the whole complex dimerizes. Requires Fe(2+) as cofactor.

Its subcellular location is the cytoplasm. It carries out the reaction L-seryl-[protein] + ATP = O-phospho-L-seryl-[protein] + ADP + H(+). The enzyme catalyses L-threonyl-[protein] + ATP = O-phospho-L-threonyl-[protein] + ADP + H(+). The catalysed reaction is L-threonylcarbamoyladenylate + adenosine(37) in tRNA = N(6)-L-threonylcarbamoyladenosine(37) in tRNA + AMP + H(+). Functionally, required for the formation of a threonylcarbamoyl group on adenosine at position 37 (t(6)A37) in tRNAs that read codons beginning with adenine. Is a component of the KEOPS complex that is probably involved in the transfer of the threonylcarbamoyl moiety of threonylcarbamoyl-AMP (TC-AMP) to the N6 group of A37. The Kae1 domain likely plays a direct catalytic role in this reaction. The Bud32 domain probably displays kinase activity that regulates Kae1 function. The protein is Probable bifunctional tRNA threonylcarbamoyladenosine biosynthesis protein of Methanobrevibacter smithii (strain ATCC 35061 / DSM 861 / OCM 144 / PS).